A 399-amino-acid polypeptide reads, in one-letter code: Arginase (399 aa).

Histidine 193, aspartate 216, histidine 218, and aspartate 220 together coordinate Mn(2+). Substrate contacts are provided by residues histidine 218–asparagine 222, serine 229–asparagine 231, and aspartate 273. Mn(2+) contacts are provided by aspartate 322 and aspartate 324. Substrate is bound by residues threonine 336 and glutamate 367.

It belongs to the arginase family. Mn(2+) serves as cofactor.

It is found in the cytoplasm. It carries out the reaction L-arginine + H2O = urea + L-ornithine. It participates in nitrogen metabolism; urea cycle; L-ornithine and urea from L-arginine: step 1/1. This chain is Arginase (CAR1), found in Eremothecium gossypii (strain ATCC 10895 / CBS 109.51 / FGSC 9923 / NRRL Y-1056) (Yeast).